Here is a 384-residue protein sequence, read N- to C-terminus: Alanine racemase (384 aa).

The active-site Proton acceptor; specific for D-alanine is the lysine 46. The residue at position 46 (lysine 46) is an N6-(pyridoxal phosphate)lysine. Arginine 144 serves as a coordination point for substrate. Residue tyrosine 278 is the Proton acceptor; specific for L-alanine of the active site. Methionine 326 lines the substrate pocket.

Belongs to the alanine racemase family. The cofactor is pyridoxal 5'-phosphate.

It catalyses the reaction L-alanine = D-alanine. The protein operates within amino-acid biosynthesis; D-alanine biosynthesis; D-alanine from L-alanine: step 1/1. Catalyzes the interconversion of L-alanine and D-alanine. May also act on other amino acids. The sequence is that of Alanine racemase (alr) from Frankia casuarinae (strain DSM 45818 / CECT 9043 / HFP020203 / CcI3).